The chain runs to 464 residues: Argininosuccinate lyase (464 aa).

This sequence belongs to the lyase 1 family. Argininosuccinate lyase subfamily.

It is found in the cytoplasm. The catalysed reaction is 2-(N(omega)-L-arginino)succinate = fumarate + L-arginine. The protein operates within amino-acid biosynthesis; L-arginine biosynthesis; L-arginine from L-ornithine and carbamoyl phosphate: step 3/3. The protein is Argininosuccinate lyase of Desulfotalea psychrophila (strain LSv54 / DSM 12343).